Reading from the N-terminus, the 290-residue chain is Carbonic anhydrase-related protein (290 aa).

Positions 1–26 are disordered; sequence MADLSFIEDTVAFPEKEEDEEEEEEG. S5 carries the phosphoserine modification. A compositionally biased stretch (acidic residues) spans 16–26; the sequence is KEEDEEEEEEG. One can recognise an Alpha-carbonic anhydrase domain in the interval 27–289; it reads VEWGYEEGVE…LSDRVIRAAF (263 aa). H87 acts as the Proton donor/acceptor in catalysis. 2 residues coordinate Zn(2+): H118 and H141.

The protein belongs to the alpha-carbonic anhydrase family.

Functionally, does not have a carbonic anhydrase catalytic activity. The chain is Carbonic anhydrase-related protein (CA8) from Homo sapiens (Human).